Consider the following 414-residue polypeptide: V-set and immunoglobulin domain-containing protein 8 (414 aa).

The first 21 residues, 1-21 (MRVGGAFHLLLVCLSPALLSA), serve as a signal peptide directing secretion. 2 Ig-like V-type domains span residues 22–141 (VRIN…VIVT) and 146–257 (PAVP…VKVS). At 22 to 263 (VRINGDGQEV…VKVSDSRRIG (242 aa)) the chain is on the extracellular side. Disulfide bonds link cysteine 44–cysteine 126 and cysteine 167–cysteine 239. Residues 264 to 284 (VIIGIVLGSLLALGCLAVGIW) traverse the membrane as a helical segment. Residues 285 to 414 (GLVCCCCGGS…PVQCKNGLLV (130 aa)) lie on the Cytoplasmic side of the membrane.

It localises to the membrane. The protein is V-set and immunoglobulin domain-containing protein 8 of Homo sapiens (Human).